The primary structure comprises 256 residues: MSQTILSIKNLTASVDGNQILKGVNLEIKAGEVHAIMGRNGSGKSTLSKVITGHPDYEITGGEIIYQGQDLSALEPHERALAGIFLAFQYPLEIPGVSNLDFLRIAYNAKRKHLGLEELDTFDFEDLIQEKLDVVKMNPAFLERSLNEGFSGGEKKRNEILQMAILEPTLSILDEIDSGLDIDALRIVSEGVNFLKNPDNATLVITHYQRLLNYIIPDHIHVMYDGKIVMSGGKELALELEEKGYDFLDEQVLAPI.

The ABC transporter domain maps to 6–250 (LSIKNLTASV…EEKGYDFLDE (245 aa)). 38 to 45 (GRNGSGKS) contacts ATP.

This sequence belongs to the ABC transporter superfamily. Ycf16 family.

The sequence is that of Probable ATP-dependent transporter slr0075 from Synechocystis sp. (strain ATCC 27184 / PCC 6803 / Kazusa).